Here is a 1002-residue protein sequence, read N- to C-terminus: Calcium-transporting ATPase sarcoplasmic/endoplasmic reticulum type (1002 aa).

Topologically, residues 1 to 48 (MEDGHSKTVEQSLNFFGTDGERGLTLDQIKTNQAKYGPNELPTEEGKS) are cytoplasmic. Residues 49-69 (IWQLVLEQFDDLLVKILLLAA) traverse the membrane as a helical segment. Residues 70–89 (IISFVLALFEEHEETFTAFV) lie on the Lumenal side of the membrane. The helical transmembrane segment at 90–110 (EPLVILLILIANAVVGVWQER) threads the bilayer. The Cytoplasmic portion of the chain corresponds to 111–253 (NAESAIEALK…EIKTPLQQKL (143 aa)). A helical membrane pass occupies residues 254 to 273 (DEFGEQLSKVISVICVAVWA). The Lumenal portion of the chain corresponds to 274–295 (INIGHFNDPAHGGSWIKGAIYY). Residues 296-313 (FKIAVALAVAAIPEGLPA) traverse the membrane as a helical segment. Positions 304, 305, 307, and 309 each coordinate Ca(2+). The Cytoplasmic portion of the chain corresponds to 314-757 (VITTCLALGT…EEGRAIYNNM (444 aa)). Asp351 functions as the 4-aspartylphosphate intermediate in the catalytic mechanism. Mg(2+) is bound by residues Asp703 and Asp707. The helical transmembrane segment at 758–777 (KQFIRYLISSNIGEVVSIFL) threads the bilayer. Asn768 and Glu771 together coordinate Ca(2+). Residues 778 to 787 (TAALGLPEAL) lie on the Lumenal side of the membrane. The chain crosses the membrane as a helical span at residues 788–808 (IPVQLLWVNLVTDGLPATALG). Residues Asn796, Thr799, and Asp800 each coordinate Ca(2+). Residues 809-828 (FNPPDLDIMDKPPRKADEGL) lie on the Cytoplasmic side of the membrane. The helical transmembrane segment at 829–851 (ISGWLFFRYMAIGFYVGAATVGA) threads the bilayer. Residues 852–897 (AAWWFIASSEGPGLTYWQLTHHLSCLGGGDEFKGVDCKIFSDPKAM) are Lumenal-facing. A helical membrane pass occupies residues 898-917 (TMALSVLVTIEMLNAMNSLS). Ca(2+) is bound at residue Glu908. Topologically, residues 918-930 (ENQSLISMPPWCN) are cytoplasmic. A helical membrane pass occupies residues 931–949 (LWLIGSMALSFTLHFVILY). The Lumenal segment spans residues 950 to 964 (VDVLSTVFQVTPLSA). Residues 965–985 (EEWITVMKFSIPVVLLDETLK) form a helical membrane-spanning segment. Residues 986–1002 (FVARKIADVPDAVVDKW) are Cytoplasmic-facing.

This sequence belongs to the cation transport ATPase (P-type) (TC 3.A.3) family.

The protein resides in the endoplasmic reticulum membrane. It is found in the sarcoplasmic reticulum membrane. It catalyses the reaction Ca(2+)(in) + ATP + H2O = Ca(2+)(out) + ADP + phosphate + H(+). In terms of biological role, this magnesium-dependent enzyme catalyzes the hydrolysis of ATP coupled with the transport of calcium. The protein is Calcium-transporting ATPase sarcoplasmic/endoplasmic reticulum type of Drosophila pseudoobscura pseudoobscura (Fruit fly).